The chain runs to 417 residues: Probable glucuronosyltransferase Os01g0926700 (417 aa).

Topologically, residues 1–3 are cytoplasmic; it reads MRR. Residues 4–24 traverse the membrane as a helical; Signal-anchor for type II membrane protein segment; that stretch reads WVLAIAILAAAVCFFLGAQAQ. Topologically, residues 25–417 are lumenal; sequence EVRQGHQTER…AGPVGDLKPW (393 aa). N-linked (GlcNAc...) asparagine glycans are attached at residues N144 and N405.

This sequence belongs to the glycosyltransferase 47 family.

The protein localises to the golgi apparatus membrane. Involved in the synthesis of glucuronoxylan hemicellulose in secondary cell walls. The polypeptide is Probable glucuronosyltransferase Os01g0926700 (Oryza sativa subsp. japonica (Rice)).